A 66-amino-acid chain; its full sequence is Putative alpha-neurotoxin RjAa16 (66 aa).

One can recognise an LCN-type CS-alpha/beta domain in the interval 1 to 60 (KEGYPVDWGNCKYECMSDAYCKDLCVDRKAKSGYCYKLNWFCYCEGLPDDSPIKTNGHCR). Intrachain disulfides connect Cys-11–Cys-59, Cys-15–Cys-35, Cys-21–Cys-42, and Cys-25–Cys-44.

It belongs to the long (4 C-C) scorpion toxin superfamily. Sodium channel inhibitor family. Alpha subfamily. As to expression, expressed by the venom gland.

The protein localises to the secreted. Its function is as follows. Alpha toxins bind voltage-independently at site-3 of sodium channels (Nav) and inhibits the inactivation of the activated channels, thereby blocking neuronal transmission. In Rhopalurus junceus (Caribbean blue scorpion), this protein is Putative alpha-neurotoxin RjAa16.